A 307-amino-acid chain; its full sequence is MLQQRTLKSISRAVGVGLHSGQRVELTLRPAPVDTGIVFRRVDLPEPVDIRMTAEAVTDTRLASTVSTGGAKVQTVEHLMSACAGLGIDNLYIDITADEVPILDGSASSFVFLLQSAGIELQKAPRRFIRVTRKVEVREGEGANEKWASLEPYHGYKLSFEIDFDHRVVNSTGQRVEFDLGTDSYSRDIARARTFGFTKEVEYMRSKGLALGGGLDNAIVMDDTKVLNAGGLRYDDEFVKHKILDAMGDLYIIGKPLLAAYTAFRSGHALNNKLLRELLAHSDAYEVVTFEDEKRAPRGFGEVARAW.

3 residues coordinate Zn(2+): His78, His241, and Asp245. The active-site Proton donor is His268.

This sequence belongs to the LpxC family. Zn(2+) is required as a cofactor.

The enzyme catalyses a UDP-3-O-[(3R)-3-hydroxyacyl]-N-acetyl-alpha-D-glucosamine + H2O = a UDP-3-O-[(3R)-3-hydroxyacyl]-alpha-D-glucosamine + acetate. Its pathway is glycolipid biosynthesis; lipid IV(A) biosynthesis; lipid IV(A) from (3R)-3-hydroxytetradecanoyl-[acyl-carrier-protein] and UDP-N-acetyl-alpha-D-glucosamine: step 2/6. Catalyzes the hydrolysis of UDP-3-O-myristoyl-N-acetylglucosamine to form UDP-3-O-myristoylglucosamine and acetate, the committed step in lipid A biosynthesis. The chain is UDP-3-O-acyl-N-acetylglucosamine deacetylase from Variovorax paradoxus (strain S110).